A 337-amino-acid polypeptide reads, in one-letter code: tRNA(Ile)-lysidine synthase (337 aa).

Residue 40–45 (SGGQDS) participates in ATP binding.

This sequence belongs to the tRNA(Ile)-lysidine synthase family.

The protein resides in the cytoplasm. The enzyme catalyses cytidine(34) in tRNA(Ile2) + L-lysine + ATP = lysidine(34) in tRNA(Ile2) + AMP + diphosphate + H(+). Ligates lysine onto the cytidine present at position 34 of the AUA codon-specific tRNA(Ile) that contains the anticodon CAU, in an ATP-dependent manner. Cytidine is converted to lysidine, thus changing the amino acid specificity of the tRNA from methionine to isoleucine. The polypeptide is tRNA(Ile)-lysidine synthase (Parasynechococcus marenigrum (strain WH8102)).